A 433-amino-acid polypeptide reads, in one-letter code: Citrate synthase, mitochondrial (433 aa).

Active-site residues include histidine 274 and histidine 320. Oxaloacetate is bound at residue arginine 329. The active site involves aspartate 375. 2 residues coordinate oxaloacetate: arginine 401 and arginine 421.

Belongs to the citrate synthase family. Homodimer.

It is found in the mitochondrion matrix. It carries out the reaction oxaloacetate + acetyl-CoA + H2O = citrate + CoA + H(+). The protein operates within carbohydrate metabolism; tricarboxylic acid cycle; isocitrate from oxaloacetate: step 1/2. Key enzyme of the Krebs tricarboxylic acid cycle which catalyzes the synthesis of citrate from acetyl coenzyme A and oxaloacetate. In Gallus gallus (Chicken), this protein is Citrate synthase, mitochondrial (CS).